We begin with the raw amino-acid sequence, 190 residues long: Peptidoglycan recognition protein 1 (190 aa).

The N-terminal stretch at 1–21 (MSRRYTPLAWVLLALLGLGAA) is a signal peptide. The residue at position 22 (glutamine 22) is a Pyrrolidone carboxylic acid. Intrachain disulfides connect cysteine 24-cysteine 148, cysteine 40-cysteine 85, and cysteine 61-cysteine 67. Residues 46 to 174 (QPVRYVVVSH…RDVQQTLSPG (129 aa)) form the N-acetylmuramoyl-L-alanine amidase domain.

Belongs to the N-acetylmuramoyl-L-alanine amidase 2 family. Homodimer; disulfide-linked.

The protein resides in the secreted. It localises to the cytoplasmic granule. Functionally, innate immunity protein that plays several important functions in antimicrobial and antitumor defense systems. Acts as a pattern receptor that binds to murein peptidoglycans (PGN) of Gram-positive bacteria and thus provides bactericidal activity. Forms an equimolar complex with heat shock protein HSPA1A and induces programmed cell death through apoptosis and necroptosis in tumor cell lines by activating the TNFR1 receptor on the target cell membrane. In addition, acts in complex with the Ca(2+)-binding protein S100A4 as a chemoattractant able to induce lymphocyte movement. Mechanistically, this complex acts as a ligand of the chemotactic receptors CCR5 and CXCR3 which are present on the cells of the immune system. Promotes also the activation of lymphocytes that become able to kill virus-infected cells as well as tumor cells by modulating the spectrum of their target-cell specificity. Induction of cytotoxicity on monocyte surface requires interaction with TREM1 receptor. The sequence is that of Peptidoglycan recognition protein 1 (PGLYRP1) from Bos indicus (Zebu).